The primary structure comprises 224 residues: Large ribosomal subunit protein uL1 (224 aa).

Belongs to the universal ribosomal protein uL1 family. Part of the 50S ribosomal subunit.

In terms of biological role, binds directly to 23S rRNA. The L1 stalk is quite mobile in the ribosome, and is involved in E site tRNA release. Its function is as follows. Protein L1 is also a translational repressor protein, it controls the translation of the L11 operon by binding to its mRNA. The polypeptide is Large ribosomal subunit protein uL1 (Borrelia duttonii (strain Ly)).